Consider the following 465-residue polypeptide: UDP-N-acetylmuramate--L-alanine ligase (465 aa).

112–118 (GTHGKTT) lines the ATP pocket.

The protein belongs to the MurCDEF family.

It localises to the cytoplasm. It carries out the reaction UDP-N-acetyl-alpha-D-muramate + L-alanine + ATP = UDP-N-acetyl-alpha-D-muramoyl-L-alanine + ADP + phosphate + H(+). It participates in cell wall biogenesis; peptidoglycan biosynthesis. Its function is as follows. Cell wall formation. The chain is UDP-N-acetylmuramate--L-alanine ligase from Burkholderia pseudomallei (strain 1106a).